We begin with the raw amino-acid sequence, 250 residues long: Aquaporin TIP2-3 (250 aa).

N-acetylmethionine is present on M1. Residues 1 to 24 (MVKIEVGSVGDSFSVSSLKAYLSE) lie on the Cytoplasmic side of the membrane. K3 bears the N6,N6-dimethyllysine mark. A helical membrane pass occupies residues 25-45 (FIATLLFVFAGVGSAVAFAKL). Over 46–54 (TSDGALDPA) the chain is Vacuolar. The chain crosses the membrane as a helical span at residues 55–75 (GLVAIAIAHAFALFVGVSIAA). The Cytoplasmic portion of the chain corresponds to 76 to 101 (NISGGHLNPAVTLGLAIGGNITLITG). Residues 83–85 (NPA) carry the NPA 1 motif. The chain crosses the membrane as a helical span at residues 102 to 122 (FFYWIAQCLGSIVACLLLVFV). Residues 123–134 (TNGKSVPTHGVS) are Vacuolar-facing. A helical transmembrane segment spans residues 135 to 155 (AGLGAVEGVVMEIVVTFALVY). Topologically, residues 156–168 (TVYATAADPKKGS) are cytoplasmic. The chain crosses the membrane as a helical span at residues 169–189 (LGTIAPIAIGFIVGANILAAG). At 190–217 (PFSGGSMNPARSFGPAVVSGDLSQIWIY) the chain is on the vacuolar side. Positions 197-199 (NPA) match the NPA 2 motif. The helical transmembrane segment at 218–238 (WVGPLVGGALAGLIYGDVFIG) threads the bilayer. Residues 239 to 250 (SYEAVETREIRV) are Cytoplasmic-facing.

This sequence belongs to the MIP/aquaporin (TC 1.A.8) family. TIP (TC 1.A.8.10) subfamily. As to quaternary structure, interacts with cucumber mosaic virus (CMV) Protein 1a. Widely expressed.

Its subcellular location is the vacuole membrane. Its function is as follows. Transports methylammonium or ammonium in yeast cells, preferentially at high medium pH. May participate in vacuolar compartmentation and detoxification of ammonium. This Arabidopsis thaliana (Mouse-ear cress) protein is Aquaporin TIP2-3 (TIP2-3).